The primary structure comprises 480 residues: MEQEDFYFPDTDLDLSFTSTTTDRTFASSSARTSLTLSFNDRLSTSSAVTTSSTSSSSVNHRRHDPHWSAIKSAKLLSSDGNIHLRHLKLIRHLGTGNLGRVFLCNLRDSSARFALKVIDRNCLTTEKKLSQVETEAEILSLLDHPFLPTLYARIDESHYTCLLIDYAPNGDLHSLLRKQPGNRLPIQPVRFFAAEVLVALEYLHAMGIVYRDLKPENVLLREDGHVMLSDFDLCFKSDVVPTFKSRRYRRSSSSPSLRRRRSGCFSVAAEKKYEREEIVSEFAAEPVTAFSRSCVGTHEYLAPELVSGNGHGSGVDWWAFGIFLYELLYGTTPFKGESKEQTLRNIVSTTKTASFHMDGDLDEARDLIEKLLVKDPRKRLGCARGAQDIKRHPFFDGIKWPLIRHYKPPEEVRGLVIKKSTRPHASHVIAVSPRRRKSFLWRALSYLLRGKSSSGGSKNQSNSNYYHYVGKSYASRKRV.

The region spanning Leu88–Phe396 is the Protein kinase domain. ATP contacts are provided by residues Leu94–Val102 and Lys117. Catalysis depends on Asp213, which acts as the Proton acceptor.

This sequence belongs to the protein kinase superfamily. Ser/Thr protein kinase family. As to expression, expressed in root tips, lateral root primordia and emerging true leaf primordia.

It is found in the cytoplasm. The protein resides in the cytosol. It carries out the reaction L-seryl-[protein] + ATP = O-phospho-L-seryl-[protein] + ADP + H(+). The enzyme catalyses L-threonyl-[protein] + ATP = O-phospho-L-threonyl-[protein] + ADP + H(+). Serine/threonine-protein kinase involved in the regulation of auxin signaling. Acts as a positive regulator of cellular auxin efflux and regulates organ development by enhancing PIN-mediated polar auxin transport. Phosphorylates conserved serine residues in the PIN auxin efflux carriers. Phosphorylation of PIN proteins is required and sufficient for apical-basal PIN polarity that enables directional intercellular auxin fluxes, which mediate differential growth, tissue patterning and organogenesis. Acts as a suppressor of root waving. The polypeptide is Serine/threonine-protein kinase WAG2 (WAG2) (Arabidopsis thaliana (Mouse-ear cress)).